Here is a 171-residue protein sequence, read N- to C-terminus: Ribosome-binding factor A (171 aa).

The segment covering 126–138 (VREGAKHAGDADP) has biased composition (basic and acidic residues). Positions 126–171 (VREGAKHAGDADPYRVSGVEEEAGGSGEVQAEFDAEDTGDRNRQDD) are disordered.

It belongs to the RbfA family. Monomer. Binds 30S ribosomal subunits, but not 50S ribosomal subunits or 70S ribosomes.

The protein resides in the cytoplasm. One of several proteins that assist in the late maturation steps of the functional core of the 30S ribosomal subunit. Associates with free 30S ribosomal subunits (but not with 30S subunits that are part of 70S ribosomes or polysomes). Required for efficient processing of 16S rRNA. May interact with the 5'-terminal helix region of 16S rRNA. The protein is Ribosome-binding factor A of Mycobacterium sp. (strain JLS).